The chain runs to 206 residues: HTH-type transcriptional regulator Hpr (206 aa).

Positions 13-157 constitute an HTH marR-type domain; it reads ALLFSQRMAQ…MMCIIRNIYG (145 aa). Residues 63-86 constitute a DNA-binding region (H-T-H motif); sequence ISEIAKFGVMHVSTAFNFSKKLEE. Residues 186-206 form a disordered region; it reads SEELEDSADAAEKAAKANQIV.

Homodimer.

Functionally, negative regulator of protease production and sporulation. The chain is HTH-type transcriptional regulator Hpr from Bacillus pumilus (strain SAFR-032).